Here is a 149-residue protein sequence, read N- to C-terminus: Small ribosomal subunit protein bS6 (149 aa).

The segment at 94 to 149 is disordered; the sequence is EKHEEGPSAMMQKRDRDDRPRRDGDRPDRGGFGDRGPRPDRGDRDDRPRRPREDRA.

Belongs to the bacterial ribosomal protein bS6 family.

Binds together with bS18 to 16S ribosomal RNA. The protein is Small ribosomal subunit protein bS6 of Sinorhizobium fredii (strain NBRC 101917 / NGR234).